The chain runs to 513 residues: Glutamate--tRNA ligase 2 (513 aa).

The 'HIGH' region motif lies at 11-21 (PSPTGFLHIGS). The 'KMSKS' region signature appears at 240 to 244 (KLSKR). Lys243 serves as a coordination point for ATP.

It belongs to the class-I aminoacyl-tRNA synthetase family. Glutamate--tRNA ligase type 1 subfamily. Monomer.

It is found in the cytoplasm. It carries out the reaction tRNA(Glu) + L-glutamate + ATP = L-glutamyl-tRNA(Glu) + AMP + diphosphate. Its function is as follows. Catalyzes the attachment of glutamate to tRNA(Glu) in a two-step reaction: glutamate is first activated by ATP to form Glu-AMP and then transferred to the acceptor end of tRNA(Glu). In Rickettsia rickettsii (strain Iowa), this protein is Glutamate--tRNA ligase 2.